The primary structure comprises 114 residues: UPF0342 protein NWMN_1737 (114 aa).

It belongs to the UPF0342 family.

This is UPF0342 protein NWMN_1737 from Staphylococcus aureus (strain Newman).